Reading from the N-terminus, the 46-residue chain is uncharacterized protein (46 aa).

The protein resides in the mitochondrion. This is an uncharacterized protein from Saccharomyces cerevisiae (strain ATCC 204508 / S288c) (Baker's yeast).